We begin with the raw amino-acid sequence, 838 residues long: Histidine biosynthesis trifunctional protein (838 aa).

Residues 1–271 are phosphoribosyl-AMP cyclohydrolase; that stretch reads MIFPILPVIS…MVEPRTGYGF (271 aa). The segment at 272 to 360 is phosphoribosyl-ATP pyrophosphohydrolase; that stretch reads CHRETKFTCF…VYFAMVWCIK (89 aa). The interval 361–838 is histidinol dehydrogenase; sequence HGVRLADIEK…IRMERMAETK (478 aa). Zn(2+) is bound by residues Gln-660 and His-663. Active-site residues include Glu-729 and His-730. Zn(2+) is bound by residues Asp-764 and His-823.

This sequence in the C-terminal section; belongs to the histidinol dehydrogenase family. Requires Zn(2+) as cofactor.

It carries out the reaction 1-(5-phospho-beta-D-ribosyl)-5'-AMP + H2O = 1-(5-phospho-beta-D-ribosyl)-5-[(5-phospho-beta-D-ribosylamino)methylideneamino]imidazole-4-carboxamide. It catalyses the reaction 1-(5-phospho-beta-D-ribosyl)-ATP + H2O = 1-(5-phospho-beta-D-ribosyl)-5'-AMP + diphosphate + H(+). The enzyme catalyses L-histidinol + 2 NAD(+) + H2O = L-histidine + 2 NADH + 3 H(+). It participates in amino-acid biosynthesis; L-histidine biosynthesis; L-histidine from 5-phospho-alpha-D-ribose 1-diphosphate: step 2/9. Its pathway is amino-acid biosynthesis; L-histidine biosynthesis; L-histidine from 5-phospho-alpha-D-ribose 1-diphosphate: step 3/9. The protein operates within amino-acid biosynthesis; L-histidine biosynthesis; L-histidine from 5-phospho-alpha-D-ribose 1-diphosphate: step 9/9. The sequence is that of Histidine biosynthesis trifunctional protein (HIS4) from Candida albicans (Yeast).